The chain runs to 1320 residues: Clustered mitochondria protein homolog (1320 aa).

Disordered stretches follow at residues 166-241 (QQLE…KQKM), 552-582 (YGSMDTPTNEEEEQQQKEENEENKNNNTKSI), and 683-708 (LKEKEERQKKEGIDPPTATARDEDVQ). A compositionally biased stretch (basic and acidic residues) spans 185-194 (TEDKEEKETI). Positions 202–213 (KKNKHHNKKGNK) are enriched in basic residues. 3 stretches are compositionally biased toward basic and acidic residues: residues 226–241 (NEEKLTPQQKERKQKM), 565–575 (QQQKEENEENK), and 683–695 (LKEKEERQKKEGI). The Clu domain occupies 379–649 (KTNRYDINKG…KATPRDPNYT (271 aa)). 5 TPR repeats span residues 955-988 (GLDLLEAGKTFFNQRKYELATELLGEALAIYHQV), 997-1030 (GACFTHLAMLAYQNEQYDLAIEYQKNALVITEKT), 1039-1072 (VQAYTTLAVFCQRSGRYNESIGYMKHVLYLTDLL), 1081-1114 (ASIYTAIAAILEDTERFDLALEFLKQTLKHQEFL), and 1123-1156 (STTYHKMAIVCARATNFDDSIIHQKKSTDILEKE). Residues 1204–1320 (KADQFKKSQP…SKPNKKSSKN (117 aa)) are disordered. The segment covering 1237–1247 (KPKKSQSKKSK) has biased composition (basic residues). Residues 1248-1311 (STNTTTTTNT…PTSSSAADSS (64 aa)) are compositionally biased toward low complexity.

This sequence belongs to the CLU family.

The protein resides in the cytoplasm. Its function is as follows. mRNA-binding protein involved in proper cytoplasmic distribution of mitochondria. This Dictyostelium discoideum (Social amoeba) protein is Clustered mitochondria protein homolog.